A 329-amino-acid polypeptide reads, in one-letter code: Beta-1,3-galactosyltransferase 6 (329 aa).

Residues 1–11 (MKLLRRAWRRR) lie on the Cytoplasmic side of the membrane. The chain crosses the membrane as a helical; Signal-anchor for type II membrane protein span at residues 12–34 (AALGLGTLALCGAALLYLARCAA). Residues 35-329 (EPGDPRAMSG…QCCQRREGIP (295 aa)) are Lumenal-facing. An N-linked (GlcNAc...) asparagine glycan is attached at N131.

The protein belongs to the glycosyltransferase 31 family. Requires Mn(2+) as cofactor. As to expression, ubiquitous.

It localises to the golgi apparatus. The protein resides in the golgi stack membrane. The catalysed reaction is 3-O-(beta-D-galactosyl-(1-&gt;4)-beta-D-xylosyl)-L-seryl-[protein] + UDP-alpha-D-galactose = 3-O-(beta-D-galactosyl-(1-&gt;3)-beta-D-galactosyl-(1-&gt;4)-beta-D-xylosyl)-L-seryl-[protein] + UDP + H(+). It functions in the pathway glycan metabolism; chondroitin sulfate biosynthesis. It participates in glycan metabolism; heparan sulfate biosynthesis. Its function is as follows. Beta-1,3-galactosyltransferase that transfers galactose from UDP-galactose to substrates with a terminal beta-linked galactose residue. Has a preference for galactose-beta-1,4-xylose that is found in the linker region of glycosaminoglycans, such as heparan sulfate and chondroitin sulfate. Has no activity towards substrates with terminal glucosamine or galactosamine residues. In Homo sapiens (Human), this protein is Beta-1,3-galactosyltransferase 6 (B3GALT6).